The following is a 95-amino-acid chain: Co-chaperonin GroES (95 aa).

The protein belongs to the GroES chaperonin family. Heptamer of 7 subunits arranged in a ring. Interacts with the chaperonin GroEL.

It localises to the cytoplasm. In terms of biological role, together with the chaperonin GroEL, plays an essential role in assisting protein folding. The GroEL-GroES system forms a nano-cage that allows encapsulation of the non-native substrate proteins and provides a physical environment optimized to promote and accelerate protein folding. GroES binds to the apical surface of the GroEL ring, thereby capping the opening of the GroEL channel. This is Co-chaperonin GroES from Streptococcus mutans serotype c (strain ATCC 700610 / UA159).